A 127-amino-acid polypeptide reads, in one-letter code: Large ribosomal subunit protein bL19 (127 aa).

Belongs to the bacterial ribosomal protein bL19 family.

This protein is located at the 30S-50S ribosomal subunit interface and may play a role in the structure and function of the aminoacyl-tRNA binding site. The sequence is that of Large ribosomal subunit protein bL19 from Myxococcus xanthus (strain DK1622).